The chain runs to 578 residues: Putative multidrug export ATP-binding/permease protein SA1683 (578 aa).

The Cytoplasmic portion of the chain corresponds to 1–15 (MIKRYLQFVKPYKYR). A helical membrane pass occupies residues 16–36 (IFATIIVGIIKFGIPMLIPLL). The ABC transmembrane type-1 domain maps to 16-306 (IFATIIVGII…LVASFTTLTQ (291 aa)). Topologically, residues 37-59 (IKYAIDGVINNHALTTDEKVHHL) are extracellular. A helical membrane pass occupies residues 60–80 (TIAIGIALFIFVIVRPPIEFI). The Cytoplasmic portion of the chain corresponds to 81-138 (RQYLAQWTSNKILYDIRKKLYNHLQALSARFYANNQVGQVISRVINDVEQTKDFILTG). The chain crosses the membrane as a helical span at residues 139 to 159 (LMNIWLDCITIIIALSIMFFL). The Extracellular portion of the chain corresponds to 160 to 162 (DVK). Residues 163 to 183 (LTLAALFIFPFYILTVYVFFG) traverse the membrane as a helical segment. Residues 184-244 (RLRKLTRERS…TRALKHTRWN (61 aa)) are Cytoplasmic-facing. Residues 245–263 (AYSFAAINTVTDIGPIIVI) form a helical membrane-spanning segment. Over 264–269 (GVGAYL) the chain is Extracellular. The helical transmembrane segment at 270 to 287 (AISGSITVGTLAAFVGYL) threads the bilayer. At 288–578 (ELLFGPLRRL…YEHLYSIQNL (291 aa)) the chain is on the cytoplasmic side. An ABC transporter domain is found at 340–575 (IDIDHVSFQY…QGAYEHLYSI (236 aa)). 374-381 (GMSGGGKS) lines the ATP pocket.

It belongs to the ABC transporter superfamily. In terms of assembly, homodimer.

It localises to the cell membrane. Its function is as follows. May be involved in multidrug export. Transmembrane domains (TMD) form a pore in the cell membrane and the ATP-binding domain (NBD) is responsible for energy generation. The sequence is that of Putative multidrug export ATP-binding/permease protein SA1683 from Staphylococcus aureus (strain N315).